The following is a 430-amino-acid chain: MLPRELGEILDVVTRHNAWRRKETINLIASENVMSPLAELYYINDLAGRYAEGTVGNRYYQGTRYVDVLEDALVKKFSAVLEAKFVDVRPISGTVANLATYFALTPEGGTVASLPVKYGGHISHNTVGGVKALRLKTVELPWDLENFNVDVDAARKLIEEKRPNLIILGASLYLFPHPVKEVAEAAKTVGAYVLHDSAHVFGLIVGGVFPNPLKEGAHVTTASTHKTFPGPQGGVIATALDDERNSQIQRAVFPTFTSNYHLHRYAATYVTLVEMEVFGREYASRIVENARALAEALASEGVPPVAEKLGYTRTHQVAVDVSKFGGGDKAAALLEEANVIVNKNALPWDKSVLKPSGIRMGVQEMTRFGMGKDEMREIARFIARVLRGEDPAAVRRDVVEFRKSYLEIKYGFKIDRGEVEKVFNSLNLNT.

A (6S)-5,6,7,8-tetrahydrofolate-binding site is contributed by 120–122; that stretch reads GHI. The residue at position 226 (lysine 226) is an N6-(pyridoxal phosphate)lysine.

This sequence belongs to the SHMT family. As to quaternary structure, homodimer. Pyridoxal 5'-phosphate is required as a cofactor.

The protein resides in the cytoplasm. It functions in the pathway amino-acid biosynthesis; glycine biosynthesis; glycine from L-serine: step 1/1. Its function is as follows. Catalyzes the reversible interconversion of serine and glycine with a modified folate serving as the one-carbon carrier. Also exhibits a pteridine-independent aldolase activity toward beta-hydroxyamino acids, producing glycine and aldehydes, via a retro-aldol mechanism. The protein is Serine hydroxymethyltransferase of Pyrobaculum neutrophilum (strain DSM 2338 / JCM 9278 / NBRC 100436 / V24Sta) (Thermoproteus neutrophilus).